We begin with the raw amino-acid sequence, 426 residues long: Mediator of RNA polymerase II transcription subunit 1 (426 aa).

The disordered stretch occupies residues 319-349; sequence ISTSNSGSVQPKPRRKSSVLSNRRPSMTDSM. A compositionally biased stretch (polar residues) spans 336-347; that stretch reads SVLSNRRPSMTD.

It belongs to the Mediator complex subunit 1 family. As to quaternary structure, component of the Mediator complex.

It localises to the nucleus. Component of the Mediator complex, a coactivator involved in the regulated transcription of nearly all RNA polymerase II-dependent genes. Mediator functions as a bridge to convey information from gene-specific regulatory proteins to the basal RNA polymerase II transcription machinery. Mediator is recruited to promoters by direct interactions with regulatory proteins and serves as a scaffold for the assembly of a functional preinitiation complex with RNA polymerase II and the general transcription factors. This is Mediator of RNA polymerase II transcription subunit 1 (MED1) from Kluyveromyces lactis (strain ATCC 8585 / CBS 2359 / DSM 70799 / NBRC 1267 / NRRL Y-1140 / WM37) (Yeast).